We begin with the raw amino-acid sequence, 430 residues long: UDP-N-acetylglucosamine 1-carboxyvinyltransferase 1 (430 aa).

22-23 lines the phosphoenolpyruvate pocket; the sequence is KN. Position 93 (Arg-93) interacts with UDP-N-acetyl-alpha-D-glucosamine. Cys-117 (proton donor) is an active-site residue. Cys-117 is subject to 2-(S-cysteinyl)pyruvic acid O-phosphothioketal. UDP-N-acetyl-alpha-D-glucosamine is bound by residues 122–126, Asp-305, and Val-327; that span reads RPVDL.

Belongs to the EPSP synthase family. MurA subfamily.

The protein resides in the cytoplasm. The catalysed reaction is phosphoenolpyruvate + UDP-N-acetyl-alpha-D-glucosamine = UDP-N-acetyl-3-O-(1-carboxyvinyl)-alpha-D-glucosamine + phosphate. It participates in cell wall biogenesis; peptidoglycan biosynthesis. Its function is as follows. Cell wall formation. Adds enolpyruvyl to UDP-N-acetylglucosamine. The chain is UDP-N-acetylglucosamine 1-carboxyvinyltransferase 1 from Listeria innocua serovar 6a (strain ATCC BAA-680 / CLIP 11262).